The primary structure comprises 81 residues: Small ribosomal subunit protein bS16 (81 aa).

This sequence belongs to the bacterial ribosomal protein bS16 family.

The sequence is that of Small ribosomal subunit protein bS16 from Clostridium perfringens (strain ATCC 13124 / DSM 756 / JCM 1290 / NCIMB 6125 / NCTC 8237 / Type A).